Consider the following 85-residue polypeptide: Large ribosomal subunit protein bL27 (85 aa).

Residues 1–22 (MAHKKGQGSSRNGRDSPGQHRG) are disordered.

Belongs to the bacterial ribosomal protein bL27 family.

The protein is Large ribosomal subunit protein bL27 of Anaeromyxobacter sp. (strain Fw109-5).